Reading from the N-terminus, the 315-residue chain is Probable cytochrome c oxidase subunit 2 (315 aa).

3 helical membrane-spanning segments follow: residues 54 to 74 (IALI…PLPW), 96 to 116 (LLYI…FVCI), and 133 to 153 (VLIE…IAVP). Residues H235, C270, C274, and H278 each coordinate Cu cation.

Belongs to the cytochrome c oxidase subunit 2 family. The cofactor is Cu cation. Requires heme as cofactor.

The protein localises to the cell membrane. It catalyses the reaction 4 Fe(II)-[cytochrome c] + O2 + 8 H(+)(in) = 4 Fe(III)-[cytochrome c] + 2 H2O + 4 H(+)(out). In terms of biological role, subunits I and II form the functional core of the enzyme complex. Electrons originating in cytochrome c are transferred via heme a and Cu(A) to the binuclear center formed by heme a3 and Cu(B). In Rickettsia conorii (strain ATCC VR-613 / Malish 7), this protein is Probable cytochrome c oxidase subunit 2 (ctaC).